The primary structure comprises 420 residues: Protein disulfide isomerase Creld1 (420 aa).

Positions 1-29 (MAPQPLRGLVPFLLWCLSLFLSLPGPVWL) are cleaved as a signal peptide. Over 30–362 (QPSPPPHSAP…GFFAEMTEDE (333 aa)) the chain is Extracellular. The CXXC motif lies at 46–49 (CHTC). Disulfide bonds link Cys-46–Cys-49, Cys-155–Cys-169, Cys-163–Cys-181, and Cys-183–Cys-192. Residues 153–193 (LPCPGGTERPCGGYGQCEGEGTRGGSGHCDCQAGYGGEACG) form the EGF-like 1 domain. Asn-205 carries N-linked (GlcNAc...) asparagine glycosylation. FU repeat units lie at residues 208–255 (HLVC…EQAT) and 268–315 (SYEC…VVCP). Positions 278 to 281 (CLGC) match the CXXC motif. Intrachain disulfides connect Cys-278–Cys-281, Cys-309–Cys-321, Cys-314–Cys-330, and Cys-332–Cys-343. Positions 305 to 342 (DVDECETVVCPGENEQCENTEGSYRCVCAEGFRQEDGI) constitute an EGF-like 2; calcium-binding domain. A helical membrane pass occupies residues 363–383 (MVVLQQMFFGVIICALATLAA). Residue Lys-384 is a topological domain, cytoplasmic. Residues 385 to 405 (GDLVFTAIFIGAVAAMTGYWL) form a helical membrane-spanning segment. The Extracellular portion of the chain corresponds to 406-420 (SERSDRVLEGFIKGR).

Belongs to the CRELD family.

The protein localises to the membrane. It carries out the reaction Catalyzes the rearrangement of -S-S- bonds in proteins.. In terms of biological role, protein disulfide isomerase. Promotes the localization of acetylcholine receptors (AChRs) to the plasma membrane. This Rattus norvegicus (Rat) protein is Protein disulfide isomerase Creld1 (Creld1).